We begin with the raw amino-acid sequence, 192 residues long: Large ribosomal subunit protein uL5 (192 aa).

The protein belongs to the universal ribosomal protein uL5 family. As to quaternary structure, part of the 50S ribosomal subunit; part of the 5S rRNA/L5/L18/L25 subcomplex. Contacts the 5S rRNA and the P site tRNA. Forms a bridge to the 30S subunit in the 70S ribosome.

This is one of the proteins that bind and probably mediate the attachment of the 5S RNA into the large ribosomal subunit, where it forms part of the central protuberance. In the 70S ribosome it contacts protein S13 of the 30S subunit (bridge B1b), connecting the 2 subunits; this bridge is implicated in subunit movement. Contacts the P site tRNA; the 5S rRNA and some of its associated proteins might help stabilize positioning of ribosome-bound tRNAs. The polypeptide is Large ribosomal subunit protein uL5 (Paenarthrobacter aurescens (strain TC1)).